The sequence spans 128 residues: Cytochrome c-type biogenesis protein CcmE (128 aa).

Residues 1–8 (MQKIVRNR) lie on the Cytoplasmic side of the membrane. A helical; Signal-anchor for type II membrane protein membrane pass occupies residues 9 to 29 (LIKIIICFCSACLGISIILYN). Residues 30-128 (LEKNIIFFFP…KHDENYRPPS (99 aa)) are Periplasmic-facing. The heme site is built by H120 and Y124.

It belongs to the CcmE/CycJ family.

It is found in the cell inner membrane. Its function is as follows. Heme chaperone required for the biogenesis of c-type cytochromes. Transiently binds heme delivered by CcmC and transfers the heme to apo-cytochromes in a process facilitated by CcmF and CcmH. The protein is Cytochrome c-type biogenesis protein CcmE of Rickettsia prowazekii (strain Madrid E).